Reading from the N-terminus, the 1589-residue chain is Cell division control protein 25 (1589 aa).

The segment covering 1 to 14 (MSDTNTSIPNTSSA) has biased composition (polar residues). Disordered regions lie at residues 1-53 (MSDT…STSE), 121-243 (NFGR…MNTN), 359-424 (ANIE…SLSA), and 553-574 (TMND…GDDG). Over residues 20 to 53 (ASQTPSISSSSNTSTTTNTESSSASLSSSPSTSE) the composition is skewed to low complexity. Residues 58-128 (RPIGIVVAAY…PQNFGRPLRD (71 aa)) enclose the SH3 domain. Positions 130–139 (HLRKHSHPMK) are enriched in basic residues. Residues 143–158 (SSKSSRRSSLNSLGNS) are compositionally biased toward low complexity. Residues Ser151 and Ser154 each carry the phosphoserine modification. 2 stretches are compositionally biased toward polar residues: residues 173-205 (GSST…SPFS) and 211-238 (SHIT…DGSS). Positions 359-375 (ANIEDSSTRSKQSESEQ) are enriched in basic and acidic residues. Positions 415–424 (GPSSLNSLSA) are enriched in polar residues. Position 423 is a phosphoserine (Ser423). Phosphoserine occurs at positions 580, 596, and 632. Phosphothreonine is present on Thr635. Ser649 is subject to Phosphoserine. The N-terminal Ras-GEF domain occupies 1117–1247 (SRGKIRGGTK…LLQKINEKLI (131 aa)). The segment covering 1249–1259 (ENEKEPVDPKQ) has biased composition (basic and acidic residues). The interval 1249-1287 (ENEKEPVDPKQQDSVSAVVQTTKRDNKSPIHMSSSSLPS) is disordered. Polar residues predominate over residues 1260 to 1269 (QDSVSAVVQT). Residues 1305-1542 (DPYTYATQLT…YQLSLQVEPR (238 aa)) form the Ras-GEF domain. Residues 1452–1473 (DVACVPFFGVYLSDLTFTFVGN) traverse the membrane as a helical segment. The tract at residues 1570–1589 (DKNGNFLKLGKKKPPSRLFR) is disordered. Positions 1578 to 1589 (LGKKKPPSRLFR) are enriched in basic residues.

It is found in the membrane. Promotes the exchange of Ras-bound GDP by GTP. This protein positively controls the level of cellular cAMP at start, the stage at which the yeast cell division cycle is triggered. The chain is Cell division control protein 25 (CDC25) from Saccharomyces cerevisiae (strain ATCC 204508 / S288c) (Baker's yeast).